The primary structure comprises 478 residues: Putative indole-3-acetic acid-amido synthetase GH3.10 (478 aa).

The protein belongs to the IAA-amido conjugating enzyme family.

Its function is as follows. May catalyze the synthesis of indole-3-acetic acid (IAA)-amino acid conjugates, providing a mechanism for the plant to cope with the presence of excess auxin. The protein is Putative indole-3-acetic acid-amido synthetase GH3.10 (GH3.10) of Oryza sativa subsp. japonica (Rice).